Reading from the N-terminus, the 280-residue chain is Putative pyruvate, phosphate dikinase regulatory protein (280 aa).

Residue 156–163 (GVSRTSKT) participates in ADP binding.

It belongs to the pyruvate, phosphate/water dikinase regulatory protein family. PDRP subfamily.

The enzyme catalyses N(tele)-phospho-L-histidyl/L-threonyl-[pyruvate, phosphate dikinase] + ADP = N(tele)-phospho-L-histidyl/O-phospho-L-threonyl-[pyruvate, phosphate dikinase] + AMP + H(+). It catalyses the reaction N(tele)-phospho-L-histidyl/O-phospho-L-threonyl-[pyruvate, phosphate dikinase] + phosphate + H(+) = N(tele)-phospho-L-histidyl/L-threonyl-[pyruvate, phosphate dikinase] + diphosphate. Bifunctional serine/threonine kinase and phosphorylase involved in the regulation of the pyruvate, phosphate dikinase (PPDK) by catalyzing its phosphorylation/dephosphorylation. This is Putative pyruvate, phosphate dikinase regulatory protein from Hyphomonas neptunium (strain ATCC 15444).